Reading from the N-terminus, the 118-residue chain is Small ribosomal subunit protein mS37 (118 aa).

In terms of domain architecture, CHCH spans 42-84 (EATCITEMSMMMACWKQNEFRDEACRKEIQDFFDCSSRAQEAR). Short sequence motifs (cx9C motif) lie at residues 45 to 55 (CITEMSMMMAC) and 66 to 76 (CRKEIQDFFDC). Disulfide bonds link Cys45-Cys76 and Cys55-Cys66. The disordered stretch occupies residues 86–105 (MRSIQESLGQSESLSPHKMT). Polar residues predominate over residues 89-99 (IQESLGQSESL).

This sequence belongs to the mitochondrion-specific ribosomal protein mS37 family. In terms of assembly, component of the mitochondrial ribosome small subunit (28S) which comprises a 12S rRNA and about 30 distinct proteins.

Its subcellular location is the mitochondrion. The protein localises to the nucleus. This Mus musculus (Mouse) protein is Small ribosomal subunit protein mS37 (Chchd1).